The following is a 445-amino-acid chain: UPF0210 protein STK_02450 (445 aa).

Belongs to the UPF0210 family.

This is UPF0210 protein STK_02450 from Sulfurisphaera tokodaii (strain DSM 16993 / JCM 10545 / NBRC 100140 / 7) (Sulfolobus tokodaii).